Consider the following 212-residue polypeptide: Ribonuclease HII (212 aa).

An RNase H type-2 domain is found at 20–209; it reads TCVVGVDEVG…VHNILYQEAS (190 aa). A divalent metal cation contacts are provided by D26, E27, and D117.

It belongs to the RNase HII family. It depends on Mn(2+) as a cofactor. Requires Mg(2+) as cofactor.

The protein localises to the cytoplasm. The catalysed reaction is Endonucleolytic cleavage to 5'-phosphomonoester.. Its function is as follows. Endonuclease that specifically degrades the RNA of RNA-DNA hybrids. The sequence is that of Ribonuclease HII from Cereibacter sphaeroides (strain ATCC 17029 / ATH 2.4.9) (Rhodobacter sphaeroides).